A 214-amino-acid polypeptide reads, in one-letter code: Large ribosomal subunit protein uL3 (214 aa).

Positions 129–155 are disordered; sequence FGRGPMSHGSKNHRRPGSVGAGTTPGR.

The protein belongs to the universal ribosomal protein uL3 family. In terms of assembly, part of the 50S ribosomal subunit. Forms a cluster with proteins L14 and L19.

One of the primary rRNA binding proteins, it binds directly near the 3'-end of the 23S rRNA, where it nucleates assembly of the 50S subunit. This is Large ribosomal subunit protein uL3 from Synechococcus sp. (strain JA-3-3Ab) (Cyanobacteria bacterium Yellowstone A-Prime).